The following is a 223-amino-acid chain: MQLKPMEINPEMLNKVLAKLGVAGQWRFADVLGLEEETLGSVPSPACALLLLFPLTAQHENFRKKQIEELKGQEVSPKVYFMKQTIGNSCGTIGLIHAVANNQDKLEFEDGSVLKQFLSETEKLSPEDRAKCFEKNEAIQAAHDSVAQEGQCRVDDKVNFHFILFNNVDGHLYELDGRMPFPVNHGASSEDSLLQDAAKVCREFTEREQGEVRFSAVALCKAA.

Met-1 bears the N-acetylmethionine mark. Residues 2–221 (QLKPMEINPE…VRFSAVALCK (220 aa)) enclose the UCH catalytic domain. An interaction with ubiquitin region spans residues 5–10 (PMEINP). Catalysis depends on Cys-90, which acts as the Nucleophile. The residue at position 125 (Ser-125) is a Phosphoserine. The Proton donor role is filled by His-161. Residues 211–216 (EVRFSA) are interaction with ubiquitin. Cys-220 is lipidated: S-farnesyl cysteine. A propeptide spans 221 to 223 (KAA) (removed in mature form).

It belongs to the peptidase C12 family. Monomer. Homodimer. Interacts with COPS5 and SNCA. In terms of processing, O-glycosylated. As to expression, expressed in brain, where it is found in neurons but not in oligodendrocytes or astrocytes. Found in the ganglion cell layer and the inner nuclear layer of the retina (at protein level). Expressed in brain and testis. In the brain, expression is at its lowest in replaceable neurons of hippocampus and olfactory bulb. Highly expressed in senescent pituitary. In skeletal muscle, primarily expressed in oxidative muscle fibers.

The protein localises to the cytoplasm. The protein resides in the endoplasmic reticulum membrane. The enzyme catalyses Thiol-dependent hydrolysis of ester, thioester, amide, peptide and isopeptide bonds formed by the C-terminal Gly of ubiquitin (a 76-residue protein attached to proteins as an intracellular targeting signal).. Deubiquitinase that plays a role in the regulation of several processes such as maintenance of synaptic function, cardiac function, inflammatory response or osteoclastogenesis. Abrogates the ubiquitination of multiple proteins including WWTR1/TAZ, EGFR, HIF1A and beta-site amyloid precursor protein cleaving enzyme 1/BACE1. In addition, recognizes and hydrolyzes a peptide bond at the C-terminal glycine of ubiquitin to maintain a stable pool of monoubiquitin that is a key requirement for the ubiquitin-proteasome and the autophagy-lysosome pathways. Regulates amyloid precursor protein/APP processing by promoting BACE1 degradation resulting in decreased amyloid beta production. Plays a role in the immune response by regulating the ability of MHC I molecules to reach cross-presentation compartments competent for generating Ag-MHC I complexes. Mediates the 'Lys-48'-linked deubiquitination of the transcriptional coactivator WWTR1/TAZ leading to its stabilization and inhibition of osteoclastogenesis. Deubiquitinates and stabilizes epidermal growth factor receptor EGFR to prevent its degradation and to activate its downstream mediators. Modulates oxidative activity in skeletal muscle by regulating key mitochondrial oxidative proteins. Enhances the activity of hypoxia-inducible factor 1-alpha/HIF1A by abrogateing its VHL E3 ligase-mediated ubiquitination and consequently inhibiting its degradation. This Mus musculus (Mouse) protein is Ubiquitin carboxyl-terminal hydrolase isozyme L1 (Uchl1).